The primary structure comprises 466 residues: MSVAPVVDVLQGRVAVDSEVTVRGWIRTRRDSKAGISFLAVYDGSCFNPLQAVVNNNLPNYQDEVLHLTTGCSVEVTGTVVASLGQGQNFELQATKIVVIGLVEDPDTYPMAAKRHSIEYLREVAHLRPRTNLIGAVARMRHTLAQALHRFFHENGYFWVSTPLITAADTEGAGEMFRVSTLDLQNLPLTDKGEVDFNQDFFGREAFLTVSGQLNGEAYACALSKVYTFGPTFRAENSNTSRHLAEFWMLEPEIAFANLNDAATLAENMLKYVFKAALAERADDLQFFAERVDKDVITRLEKFINSDFAQIDYTSAIEILQNCGQKFENPVFWGVDLSSEHERYLAEKHFQAPVVVKNYPKDIKAFYMRMNDDGKTVAALDVLAPGIGEIIGGSQREERLDMLDKRLEEMGLNKEDYWWYRDLRRYGTVPHSGFGLGFERLVAYVTGVPNVRDVIPFPRTPRSANF.

It belongs to the class-II aminoacyl-tRNA synthetase family. In terms of assembly, homodimer.

The protein resides in the cytoplasm. It carries out the reaction tRNA(Asn) + L-asparagine + ATP = L-asparaginyl-tRNA(Asn) + AMP + diphosphate + H(+). This Photorhabdus laumondii subsp. laumondii (strain DSM 15139 / CIP 105565 / TT01) (Photorhabdus luminescens subsp. laumondii) protein is Asparagine--tRNA ligase.